We begin with the raw amino-acid sequence, 1338 residues long: Protein dispatched homolog 3 (1338 aa).

Residues 1 to 67 (MDTEDDPLLQ…VGWIFTNPYC (67 aa)) are Cytoplasmic-facing. Residues 68 to 88 (AGFILFLGCAIPAVLAVVMFL) traverse the membrane as a helical segment. Over 89 to 406 (HYPALDIDIS…YEVRRTFNND (318 aa)) the chain is Lumenal. Residues 164–196 (TRAKRSAPQGRTSSPEPRAHPHPGNETSRVTRG) are disordered. Residues 401–559 (RTFNNDMLLA…LFTMPAALGI (159 aa)) enclose the SSD domain. Residues 407–427 (MLLAFISSSCIAVLVYILTSC) form a helical membrane-spanning segment. Position 428 (S428) is a topological domain, cytoplasmic. The chain crosses the membrane as a helical span at residues 429–449 (VFLSFFGIASIGLSCLVALFL). At 450–452 (YHV) the chain is on the lumenal side. Residues 453–473 (VFGIQYLGILNGVAAFVIVGI) traverse the membrane as a helical segment. Residues 474 to 517 (GVDDVFVFINTYRQATHLKDLRLRMIHTIQTAGKATFFTSLTTA) are Cytoplasmic-facing. The helical transmembrane segment at 518 to 538 (AAYAANIFSQIPAVHDFGLFM) threads the bilayer. Residue S539 is a topological domain, lumenal. The helical transmembrane segment at 540 to 560 (LIVSCCWVAVLFTMPAALGIW) threads the bilayer. At 561-672 (TLYVSPLESS…WVLWSAVKSR (112 aa)) the chain is on the cytoplasmic side. A helical membrane pass occupies residues 673 to 693 (WVIVGLFLLVLLLSIFFASRL). Residues 694 to 1128 (RPASRAPVLF…IFMEIIGVQS (435 aa)) are Lumenal-facing. Residues 747 to 768 (SLEKKKRGSASPWGSKGSISDT) form a disordered region. Residues 1129 to 1149 (ALYGLILSLVICVAAVAVFTT) traverse the membrane as a helical segment. Residue H1150 is a topological domain, cytoplasmic. Residues 1151 to 1171 (ILLLLPVLLSILGVVCLVVTI) traverse the membrane as a helical segment. The Lumenal portion of the chain corresponds to 1172 to 1237 (MYWSGWEMGA…TIEAIRHVGV (66 aa)). The helical transmembrane segment at 1238-1258 (AIVSSAVTTVIATVPLFFCII) threads the bilayer. Residues 1259 to 1266 (APFAKFGK) are Cytoplasmic-facing. The helical transmembrane segment at 1267–1287 (IVALNTGVSILYTLTVSTALL) threads the bilayer. Over 1288-1302 (SIMGPGTFTRSRTSC) the chain is Lumenal. A helical membrane pass occupies residues 1303 to 1323 (LKAVAGVLLAGLLGLCICLAL). Over 1324-1338 (LKGGFKIPLPNGTAL) the chain is Cytoplasmic.

The protein belongs to the patched family. As to expression, expressed in retina, hippocampus and cerebellum. Expressed in the ganglion and bipolar cells of the inner and outer nuclear layers of the retina and in Purkinje cells (at protein level). Expressed strongly in brain and retina, weakly in testis and bone marrow.

The protein resides in the endoplasmic reticulum membrane. The protein localises to the nucleus membrane. It localises to the cytoplasmic vesicle membrane. Its function is as follows. Plays a role in neuronal proliferation and differentiation. Plays a role in the accumulation of cellular cholesterol. Involved in intracellular lipid droplet formation. May contribute to cholesterol homeostasis in neuronal cells. This Gallus gallus (Chicken) protein is Protein dispatched homolog 3.